The following is a 429-amino-acid chain: 3-phosphoshikimate 1-carboxyvinyltransferase (429 aa).

3-phosphoshikimate contacts are provided by Lys-23, Ser-24, and Arg-28. Lys-23 is a binding site for phosphoenolpyruvate. 2 residues coordinate phosphoenolpyruvate: Gly-95 and Arg-123. Ser-168, Gln-170, Asp-316, and Lys-343 together coordinate 3-phosphoshikimate. Phosphoenolpyruvate is bound at residue Gln-170. Asp-316 acts as the Proton acceptor in catalysis. The phosphoenolpyruvate site is built by Arg-347 and Arg-389.

This sequence belongs to the EPSP synthase family. In terms of assembly, monomer.

The protein localises to the cytoplasm. It catalyses the reaction 3-phosphoshikimate + phosphoenolpyruvate = 5-O-(1-carboxyvinyl)-3-phosphoshikimate + phosphate. It participates in metabolic intermediate biosynthesis; chorismate biosynthesis; chorismate from D-erythrose 4-phosphate and phosphoenolpyruvate: step 6/7. Its function is as follows. Catalyzes the transfer of the enolpyruvyl moiety of phosphoenolpyruvate (PEP) to the 5-hydroxyl of shikimate-3-phosphate (S3P) to produce enolpyruvyl shikimate-3-phosphate and inorganic phosphate. The polypeptide is 3-phosphoshikimate 1-carboxyvinyltransferase (Bacillus thuringiensis subsp. konkukian (strain 97-27)).